Reading from the N-terminus, the 1131-residue chain is Protein TOPLESS (1131 aa).

Positions 4–36 (LSRELVFLILQFLDEEKFKETVHKLEQESGFFF) constitute a LisH domain. The CTLH domain occupies 34-92 (FFFNMKYFEDEVHNGNWDEVEKYLSGFTKVDDNRYSMKIFFEIRKQKYLEALDKHDRPK). Phosphoserine is present on Ser214. Positions 286–305 (TPPTNASLDYPSADSEHVSK) are disordered. WD repeat units follow at residues 353–393 (SQGS…RLVQ), 415–454 (EPVV…DMRQ), 460–501 (AHVG…KRHT), 504–545 (GHEA…SRVD), 548–591 (APGR…VKRT), 595–634 (FHKR…LLTA), 639–678 (GGLQ…RLLH), 710–756 (DRSA…EPSQ), 766–805 (LRVA…RNAT), 833–871 (NPEE…TMAT), 874–914 (PPPP…VKSK), 917–956 (GHSK…KQRS), 967–1005 (NSAP…CMKQ), 1010–1049 (ESLA…LRCR), and 1060–1102 (LSNS…GKWG). The interval 1100 to 1131 (KWGVAPPAENGSASGAPTAPSVGASASDQPQR) is disordered.

As to quaternary structure, tetramer. Homodimer. Interacts (via the LisH domain) with WUS (via the C-terminal domain). Interacts with NINJA/AFPH2. Interacts with IAA1; IAA2; IAA3; IAA4; IAA6; IAA8; IAA9; IAA11; IAA13; IAA14; IAA17; IAA18; IAA26; IAA27 and IAA28. Interacts (via the LisH domain) with IAA12/BDL (via domain I). Can form a complex with IAA12 and ARF5. Interacts with AP2 (via EAR motif) and HDA19. Interacts with TIFY5A/JAZ8 (via EAR motif). Interacts with SPEAR3/TIE1. Interacts with SPL (via EAR motif). Interacts with ZAT2 and ZAT3 (via the EAR motif). Interacts with JAZ13 (via EAR motif). Interacts with GIR1 and GIR2. In terms of tissue distribution, expressed in embryo and in extraembryonic tissues. Expressed in inflorescences, flowers, floral meristems, developing anthers and ovules. Detected in the vascular tissues, shoot apical meristem, cotyledons and young leaves. Expressed ubiquitously in the pistils, stamens and pollens.

The protein localises to the nucleus. In terms of biological role, transcriptional corepressor. May repress the expression of root-promoting genes in the top half of the embryo to allow proper differentiation of the shoot pole during the transition stage of embryogenesis. Regulates the expression of PLT1 and PLT2. Negative regulator of jasmonate responses. Negative regulator of auxin responses. Negative regulator of multiple floral organ identity genes. Required for ovule development. This chain is Protein TOPLESS (TPL), found in Arabidopsis thaliana (Mouse-ear cress).